A 374-amino-acid polypeptide reads, in one-letter code: Probable ethanolamine kinase (374 aa).

ATP is bound by residues Arg93 and Asp252.

It belongs to the choline/ethanolamine kinase family.

The enzyme catalyses ethanolamine + ATP = phosphoethanolamine + ADP + H(+). It functions in the pathway phospholipid metabolism; phosphatidylethanolamine biosynthesis; phosphatidylethanolamine from ethanolamine: step 1/3. Functionally, involved in phospholipid biosynthesis. Catalyzes the first step in phosphatidylethanolamine biosynthesis. In Arabidopsis thaliana (Mouse-ear cress), this protein is Probable ethanolamine kinase (EMB1187).